We begin with the raw amino-acid sequence, 430 residues long: Glutamate-1-semialdehyde 2,1-aminomutase (430 aa).

Residue Lys-270 is modified to N6-(pyridoxal phosphate)lysine.

Belongs to the class-III pyridoxal-phosphate-dependent aminotransferase family. HemL subfamily. As to quaternary structure, homodimer. It depends on pyridoxal 5'-phosphate as a cofactor.

Its subcellular location is the cytoplasm. It catalyses the reaction (S)-4-amino-5-oxopentanoate = 5-aminolevulinate. The protein operates within porphyrin-containing compound metabolism; protoporphyrin-IX biosynthesis; 5-aminolevulinate from L-glutamyl-tRNA(Glu): step 2/2. The chain is Glutamate-1-semialdehyde 2,1-aminomutase from Cupriavidus necator (strain ATCC 17699 / DSM 428 / KCTC 22496 / NCIMB 10442 / H16 / Stanier 337) (Ralstonia eutropha).